A 154-amino-acid polypeptide reads, in one-letter code: Small ribosomal subunit protein uS7 (154 aa).

It belongs to the universal ribosomal protein uS7 family.

In Nicotiana plumbaginifolia (Leadwort-leaved tobacco), this protein is Small ribosomal subunit protein uS7 (RPS5).